A 349-amino-acid chain; its full sequence is Nicotinate-nucleotide--dimethylbenzimidazole phosphoribosyltransferase (349 aa).

E318 (proton acceptor) is an active-site residue.

Belongs to the CobT family.

The enzyme catalyses 5,6-dimethylbenzimidazole + nicotinate beta-D-ribonucleotide = alpha-ribazole 5'-phosphate + nicotinate + H(+). It participates in nucleoside biosynthesis; alpha-ribazole biosynthesis; alpha-ribazole from 5,6-dimethylbenzimidazole: step 1/2. Its function is as follows. Catalyzes the synthesis of alpha-ribazole-5'-phosphate from nicotinate mononucleotide (NAMN) and 5,6-dimethylbenzimidazole (DMB). The polypeptide is Nicotinate-nucleotide--dimethylbenzimidazole phosphoribosyltransferase (Geobacter sp. (strain M21)).